Consider the following 142-residue polypeptide: MPFSASDRHDITHLWEKMAPNVEFLGEEAMERLFKSHPKTKTYFSHLNVEHGSAAVRAQGAKVLNAIGHASKNLDHLDEALSNLSDKHAHDLRVDPGNFHLLCHNILVVLAIHFPEDFTPRAHAAFDKFLAAVSETLYSKYR.

The region spanning 2–142 is the Globin domain; sequence PFSASDRHDI…VSETLYSKYR (141 aa). Residue glutamine 59 coordinates O2. Histidine 88 is a binding site for heme b.

The protein belongs to the globin family. Heterotetramer of either two alpha-B chains or two alpha-C chains and two beta chains. The two major hemoglobins, B and C, associate upon deoxygenation to form a trimer of tetramers, BC2, that has a much lower affinity for oxygen than either component alone. Red blood cells.

In terms of biological role, the alpha-B chain is a component of adult hemoglobin B. The polypeptide is Hemoglobin subunit alpha-B (Aquarana catesbeiana (American bullfrog)).